A 314-amino-acid chain; its full sequence is N-acyl-aromatic-L-amino acid amidohydrolase (carboxylate-forming) B (314 aa).

2 residues coordinate Zn(2+): His19 and Glu22. Substrate is bound by residues Arg63 and 70–71; that span reads NR. A Zn(2+)-binding site is contributed by His116. Residues Glu178 and Tyr289 each coordinate substrate.

The protein belongs to the AspA/AstE family. Aspartoacylase subfamily. In terms of assembly, homotetramer. It depends on Zn(2+) as a cofactor.

The protein resides in the apical cell membrane. Its subcellular location is the cytoplasm. The catalysed reaction is an N-acyl-aromatic L-alpha-amino acid + H2O = an aromatic L-alpha-amino acid + a carboxylate. It carries out the reaction an N-acetyl-L-cysteine-S-conjugate + H2O = an S-substituted L-cysteine + acetate. Plays an important role in deacetylating mercapturic acids in kidney proximal tubules. The polypeptide is N-acyl-aromatic-L-amino acid amidohydrolase (carboxylate-forming) B (acy3.2) (Danio rerio (Zebrafish)).